The following is a 178-amino-acid chain: CASP-like protein 5B1 (178 aa).

Topologically, residues Met1–Thr37 are cytoplasmic. The chain crosses the membrane as a helical span at residues Ile38–Met58. Residues Val59–Ala69 lie on the Extracellular side of the membrane. Residue Asn66 is glycosylated (N-linked (GlcNAc...) asparagine). Residues Phe70–Leu90 form a helical membrane-spanning segment. Over Asp91–Ser104 the chain is Cytoplasmic. A helical membrane pass occupies residues Val105–Ala125. The Extracellular portion of the chain corresponds to Cys126–Ala154. A helical transmembrane segment spans residues Ala155–Trp175. Over Ala176–Glu178 the chain is Cytoplasmic.

The protein belongs to the Casparian strip membrane proteins (CASP) family. In terms of assembly, homodimer and heterodimers.

It is found in the cell membrane. This chain is CASP-like protein 5B1, found in Ginkgo biloba (Ginkgo).